Here is a 217-residue protein sequence, read N- to C-terminus: Large ribosomal subunit protein uL1A (217 aa).

Ser2 is modified (N-acetylserine). Lys47 is modified (N6-methyllysine; by RKM5). Phosphoserine occurs at positions 79 and 86.

This sequence belongs to the universal ribosomal protein uL1 family. As to quaternary structure, component of the large ribosomal subunit (LSU). Mature yeast ribosomes consist of a small (40S) and a large (60S) subunit. The 40S small subunit contains 1 molecule of ribosomal RNA (18S rRNA) and 33 different proteins (encoded by 57 genes). The large 60S subunit contains 3 rRNA molecules (25S, 5.8S and 5S rRNA) and 46 different proteins (encoded by 81 genes). uL1 forms part of the L1 stalk. Post-translationally, N-terminally acetylated by acetyltransferase NatA.

It is found in the cytoplasm. Its function is as follows. Component of the ribosome, a large ribonucleoprotein complex responsible for the synthesis of proteins in the cell. The small ribosomal subunit (SSU) binds messenger RNAs (mRNAs) and translates the encoded message by selecting cognate aminoacyl-transfer RNA (tRNA) molecules. The large subunit (LSU) contains the ribosomal catalytic site termed the peptidyl transferase center (PTC), which catalyzes the formation of peptide bonds, thereby polymerizing the amino acids delivered by tRNAs into a polypeptide chain. The nascent polypeptides leave the ribosome through a tunnel in the LSU and interact with protein factors that function in enzymatic processing, targeting, and the membrane insertion of nascent chains at the exit of the ribosomal tunnel. uL1 forms part of the L1 stalk, a mobile element that plays a role in evacuating the exit-site tRNA. The chain is Large ribosomal subunit protein uL1A from Saccharomyces cerevisiae (strain ATCC 204508 / S288c) (Baker's yeast).